Here is a 244-residue protein sequence, read N- to C-terminus: Probable hydrolase R7 (244 aa).

The signal sequence occupies residues 1–20 (MTKPFILLVPGSFAPETIYA). Catalysis depends on charge relay system residues Asp192 and His224. N-linked (GlcNAc...) asparagine glycosylation is present at Asn227.

Belongs to the AB hydrolase superfamily.

The protein operates within secondary metabolite biosynthesis. Probable hydrolase; part of the gene cluster that mediates the biosynthesis of squalestatin S1 (SQS1, also known as zaragozic acid A), a lead compound for the treatment of hyper-cholesterolemia by targeting squalene synthase (SS). Both phenylalanine and benzoic acid are known precursors of SQS1 and so it is unsurprising that the cluster also contains genes potentially involved in benzoate production such as phenyl-alanine ammonia lysase (PAL) M7, which catalyzes the first step in the degradation of phenylalanine, or the NADP-dependent dehydrogenase M3. The cluster contains two PKS encoding genes. The tetraketide synthase is responsible for the biosynthesis of the tetraketide sidechain of SQS1. The biosynthesis must involve 3 rounds of chain extension. After the first and second rounds methyl-transfer occurs, and in all rounds of extension the ketoreductase and dehydratase areactive. The enoyl reductase and C-MeT are not active in the final round of extension. The other PKS is therefore likely to encode squalestatin hexaketide synthase (SQHKS). The hexaketide main chain is initiated by benzoate which is an unusual starter unit for a highly reducing polyketide synthase. The cluster also contains a gene encoding a citrate synthase-like protein R3 presumably involved in linking the hexaketide to the oxaloacetate moiety. Formation of the tetraketide CoA may be catalyzed by the M9 CoA ligase, but the mechanism of release of the tetraketide and the hexaketide from their respective PKS remains unknown, although the cluster encodes a potential esterase (M8) and a possible hydrolase (M10) which could be involved in these processes. Two acyltransferases (AT), M4 and R4, are also encoded in the cluster. M4 is responsible for loading of the tetraketide sidechain from CoA onto the squalestatin core as the final step of biosynthesis. M4 appears to have a broad substrate selectivity for its acyl CoA substrate, allowing the in vitro synthesis of novel squalestatins. The biosynthesis of SQS1 requires several oxidative steps likely performed by oxidoreductases M1, R1 and R2. Finally, in support of the identification of the cluster as being responsible for SQS1 production, the cluster contains a gene encoding a putative squalene synthase (SS) R6, suggesting a likely mechanism for self-resistance. This Phoma sp. (strain ATCC 20986 / MF5453) protein is Probable hydrolase R7.